We begin with the raw amino-acid sequence, 265 residues long: O-methyltransferase NEC2 (265 aa).

Belongs to the methyltransferase superfamily.

The enzyme catalyses desmethylnectriapyrone + S-adenosyl-L-methionine = nectriapyrone + S-adenosyl-L-homocysteine + H(+). O-methyltransferase; part of the gene cluster that mediates the biosynthesis of nectriapyrone and its analogs phomopyrone A, acropyrone and zaepyrone. The nectriapyrone biosynthetic gene cluster consists of two genes, the highly reducing polyketide synthase NEC1 that produces a demethylated analog of nectriapyrone from one unit of acetyl-CoA and one unit of malonyl-CoA; and the O-methyltransferase NEC2 that further methylates the NEC1 product to yield nectriapyrone. Nectriapyrone is further hydrolyzed to nectriapyrone D, also known as gulypyrone B, by an unidentified hydrolase localized outside the nectriapyrone cluster. This is O-methyltransferase NEC2 from Pyricularia oryzae (strain 70-15 / ATCC MYA-4617 / FGSC 8958) (Rice blast fungus).